A 119-amino-acid polypeptide reads, in one-letter code: Hydrogenase maturation factor HypA (119 aa).

A Ni(2+)-binding site is contributed by His-2. Zn(2+) contacts are provided by Cys-73, Cys-76, Cys-89, and Cys-92.

Belongs to the HypA/HybF family.

Its function is as follows. Involved in the maturation of [NiFe] hydrogenases. Required for nickel insertion into the metal center of the hydrogenase. The chain is Hydrogenase maturation factor HypA from Dehalococcoides mccartyi (strain CBDB1).